We begin with the raw amino-acid sequence, 76 residues long: ATP synthase subunit 9, mitochondrial (76 aa).

2 helical membrane-spanning segments follow: residues 13 to 35 (GISTIGLLGAGIGIAIVFAALIQ) and 50 to 72 (FAILGFAISEATGLFCLMISFLL).

Belongs to the ATPase C chain family. In terms of assembly, F-type ATPases have 2 components, CF(1) - the catalytic core - and CF(0) - the membrane proton channel. In yeast, the dimeric form of ATP synthase consists of 18 polypeptides: alpha, beta, gamma, delta, epsilon, 4 (B), 5 (OSCP), 6 (A), 8, 9 (C), d, E (Tim11), f, g, h, i, j and k.

Its subcellular location is the mitochondrion membrane. In terms of biological role, mitochondrial membrane ATP synthase (F(1)F(0) ATP synthase or Complex V) produces ATP from ADP in the presence of a proton gradient across the membrane which is generated by electron transport complexes of the respiratory chain. F-type ATPases consist of two structural domains, F(1) - containing the extramembraneous catalytic core and F(0) - containing the membrane proton channel, linked together by a central stalk and a peripheral stalk. During catalysis, ATP synthesis in the catalytic domain of F(1) is coupled via a rotary mechanism of the central stalk subunits to proton translocation. Part of the complex F(0) domain. A homomeric c-ring of probably 10 subunits is part of the complex rotary element. This chain is ATP synthase subunit 9, mitochondrial (ATP9), found in Eremothecium gossypii (strain ATCC 10895 / CBS 109.51 / FGSC 9923 / NRRL Y-1056) (Yeast).